The primary structure comprises 149 residues: Transcriptional repressor NrdR (149 aa).

The segment at 3–34 (CPFCSATDTKVIDSRLVADGHQVRRRRECAEC) is a zinc-finger region. Residues 49-139 (PRVVKQDGSR…VYRAFEDVSE (91 aa)) form the ATP-cone domain.

Belongs to the NrdR family. The cofactor is Zn(2+).

Functionally, negatively regulates transcription of bacterial ribonucleotide reductase nrd genes and operons by binding to NrdR-boxes. This Shewanella sediminis (strain HAW-EB3) protein is Transcriptional repressor NrdR.